The chain runs to 160 residues: Small ribosomal subunit protein uS7 (160 aa).

This sequence belongs to the universal ribosomal protein uS7 family. In terms of assembly, part of the 30S ribosomal subunit. Contacts proteins S9 and S11.

Its function is as follows. One of the primary rRNA binding proteins, it binds directly to 16S rRNA where it nucleates assembly of the head domain of the 30S subunit. Is located at the subunit interface close to the decoding center, probably blocks exit of the E-site tRNA. In Rickettsia canadensis (strain McKiel), this protein is Small ribosomal subunit protein uS7.